A 334-amino-acid polypeptide reads, in one-letter code: Glycerol-1-phosphate dehydrogenase [NAD(P)+] (334 aa).

NAD(+) contacts are provided by residues 77–81 and 99–102; these read GRPID and TTAS. Position 104 (Asp104) interacts with substrate. NAD(+) is bound at residue Ser108. Substrate is bound at residue Asp147. Zn(2+) is bound by residues Asp147 and His225. His229 provides a ligand contact to substrate. His246 contributes to the Zn(2+) binding site.

Belongs to the glycerol-1-phosphate dehydrogenase family. Requires Zn(2+) as cofactor.

The protein localises to the cytoplasm. The catalysed reaction is sn-glycerol 1-phosphate + NAD(+) = dihydroxyacetone phosphate + NADH + H(+). The enzyme catalyses sn-glycerol 1-phosphate + NADP(+) = dihydroxyacetone phosphate + NADPH + H(+). Its pathway is membrane lipid metabolism; glycerophospholipid metabolism. Its function is as follows. Catalyzes the NAD(P)H-dependent reduction of dihydroxyacetonephosphate (DHAP or glycerone phosphate) to glycerol 1-phosphate (G1P). The G1P thus generated is used as the glycerophosphate backbone of phospholipids in the cellular membranes of Archaea. In Methanococcus maripaludis (strain C5 / ATCC BAA-1333), this protein is Glycerol-1-phosphate dehydrogenase [NAD(P)+].